Consider the following 229-residue polypeptide: Putative N-acetylmannosamine-6-phosphate 2-epimerase (229 aa).

It belongs to the NanE family.

It carries out the reaction an N-acyl-D-glucosamine 6-phosphate = an N-acyl-D-mannosamine 6-phosphate. It participates in amino-sugar metabolism; N-acetylneuraminate degradation; D-fructose 6-phosphate from N-acetylneuraminate: step 3/5. Functionally, converts N-acetylmannosamine-6-phosphate (ManNAc-6-P) to N-acetylglucosamine-6-phosphate (GlcNAc-6-P). The polypeptide is Putative N-acetylmannosamine-6-phosphate 2-epimerase (Shigella sonnei (strain Ss046)).